Here is a 160-residue protein sequence, read N- to C-terminus: Transcription factor 12 (160 aa).

A disordered region spans residues N1–M58. Residues D15–V30 show a composition bias toward basic and acidic residues. A Phosphoserine modification is found at S19. K29 is covalently cross-linked (Glycyl lysine isopeptide (Lys-Gly) (interchain with G-Cter in SUMO2)). A Phosphothreonine modification is found at T36. Position 37 is a phosphoserine (S37). Over residues P46 to M58 the composition is skewed to basic and acidic residues. A bHLH domain is found at E55–L108. Residues K87 and K131 each participate in a glycyl lysine isopeptide (Lys-Gly) (interchain with G-Cter in SUMO2) cross-link. The segment at Q110–S133 is class A specific domain. The interval V132–M160 is disordered. Residues P139–L150 show a composition bias toward low complexity. Over residues S151–M160 the composition is skewed to polar residues.

As to quaternary structure, efficient DNA binding requires dimerization with another bHLH protein. Forms homo- or heterooligomers with myogenin, E12 and ITF2 proteins. Interacts with PTF1A. Interacts with RUNX1T1. Interacts with NEUROD2. Interacts with BHLHA9.

The protein localises to the nucleus. In terms of biological role, transcriptional regulator. Involved in the initiation of neuronal differentiation. Activates transcription by binding to the E box (5'-CANNTG-3'). May be involved in the functional network that regulates the development of the GnRH axis. The protein is Transcription factor 12 (TCF12) of Papio hamadryas (Hamadryas baboon).